Consider the following 204-residue polypeptide: MPNQSRPKVKKSRALGIALTPKAVKYFEARPYPPGEHGRGRKQNSDYKVRLLEKQRLRAQYDISERQMARAYDRAKKAEGKTGEALVVELERRLDALVLRSGIARTIYQARQMVVHGHIEVNGGKVDKPSFRVRPDDIVQVRERSRSKVPFQVAREGGYDTDGETPRYLQVNLKALAFRLDRDPNRKEIPVICDEQLVVEYYAR.

The region spanning 92 to 156 is the S4 RNA-binding domain; it reads RRLDALVLRS…SKVPFQVARE (65 aa).

It belongs to the universal ribosomal protein uS4 family. Part of the 30S ribosomal subunit. Contacts protein S5. The interaction surface between S4 and S5 is involved in control of translational fidelity.

In terms of biological role, one of the primary rRNA binding proteins, it binds directly to 16S rRNA where it nucleates assembly of the body of the 30S subunit. Functionally, with S5 and S12 plays an important role in translational accuracy. This is Small ribosomal subunit protein uS4 from Streptomyces griseus subsp. griseus (strain JCM 4626 / CBS 651.72 / NBRC 13350 / KCC S-0626 / ISP 5235).